Consider the following 248-residue polypeptide: MTRYKAIISYDGSGFFGYQVQPNTRTVQAEIEKALEKMHKGKSVRITASGRTDTGVHAKGQVIHFDSELDITAEKFQKALQVMTPFDISFLTVEEAPADFHARFGTVGKEYRYVIKRTKIFDPFSRNFALHYPYELDIAKMKQASERLIGEHDFTSFCSARTERDSKVRTLYSIDFYEEDAETLVIAFQGNGFLYNMVRILTGTLLDAGQGRISPDDITKALLAHDRQKLISKTAPPQGLYLWRVDYE.

Catalysis depends on D53, which acts as the Nucleophile. Y111 provides a ligand contact to substrate.

Belongs to the tRNA pseudouridine synthase TruA family. Homodimer.

The catalysed reaction is uridine(38/39/40) in tRNA = pseudouridine(38/39/40) in tRNA. Functionally, formation of pseudouridine at positions 38, 39 and 40 in the anticodon stem and loop of transfer RNAs. In Listeria innocua serovar 6a (strain ATCC BAA-680 / CLIP 11262), this protein is tRNA pseudouridine synthase A.